Here is a 180-residue protein sequence, read N- to C-terminus: ATP-dependent protease subunit HslV (180 aa).

Threonine 7 is an active-site residue. Glycine 165, cysteine 168, and threonine 171 together coordinate Na(+).

The protein belongs to the peptidase T1B family. HslV subfamily. As to quaternary structure, a double ring-shaped homohexamer of HslV is capped on each side by a ring-shaped HslU homohexamer. The assembly of the HslU/HslV complex is dependent on binding of ATP.

The protein resides in the cytoplasm. It carries out the reaction ATP-dependent cleavage of peptide bonds with broad specificity.. Allosterically activated by HslU binding. Functionally, protease subunit of a proteasome-like degradation complex believed to be a general protein degrading machinery. The chain is ATP-dependent protease subunit HslV from Bacillus cereus (strain Q1).